A 71-amino-acid polypeptide reads, in one-letter code: 8.6 kDa protein (71 aa).

The sequence is that of 8.6 kDa protein from Pseudomonas phage Pf1 (Bacteriophage Pf1).